The sequence spans 4471 residues: MVPEEVEVEIDEIPVLSEEGEEEEETYSQKVESVDKVRAKRVSLRTESLGQPLNREDEEMDKEISEKLPSKRTAKHIMEKMHLHMLCTPLPEEFLDQNVVFFLRNTKEAISEATDMKEAMEIMPETLEYGIINANVLHFLKNIICQVFLPALSFNQHRTSTTVGVTSGEVSNSSEHESDLPPMPGEAVEYHSIQLIRDEFLMNVQKFASNIQRTMQQLEGEIKLEMPIISVEGEVSDLAADPETVDILEQCVINWLNQISTAVEAQLKKTPQGKGPLAEIEFWRERNATLSALHEQTKLPIVRKVLDVIKESDSMLVANLQPVFTELFKFHTEASDNVRFLSTVERYFKNITHGSGFHVVLDTIPAMMSALRMVWIISRHYNKDERMIPLMERIAWEIAERVCRVVNLRTLFKENRASAQSKTLEARNTLRLWKKAYFDTRAKIEASGREDRWEFDRKRLFERTDYMATICQDLSDVLQILEEFYNIFGPELKAVTGDPKRIDDVLCRVDGLVTPMENLTFDPFSIKSSQFWKYVMDEFKIEVLIDIINKIFVQNLENPPLYKNHPPVAGAIYWERSLFFRIKHTILRFQEVQEILDSDRGQEVKQKYLEVGRTMKEYEDRKYEQWMEVTEQVLPALMKKSLLTKSSIATEEPSTLERGAVFAINFSPALREIINETKYLEQLGFTVPELARNVALQEDKFLRYTAGIQRMLDHYHMLIGTLNDAESVLLKDHSQELLRVFRSGYKRLNWNSLGIGDYITGCKQAIGKFESLVHQIHKNADDISSRLTLIEAINLFKYPAAKSEEELPGVKEFFEHIERERASDVDHMVRWYLAIGPLLTKVEGLVVHTNTGKAPKLASYYKYWEKKIYEVLTKLILKNLQSFNSLILGNVPLFHTETILTAPEIILHPNTNEIDKMCFHCVRNCVEITKHFVRWMNGSCIECPPQKGEEEEVVIINFYNDISLNPQIIEQAVMIPQNVHRILINLMKYLQKWKRYRPLWKLDKAIVMEKFAAKKPPCVAYDEKLQFYSKIAYEVMRHPLIKDEHCIRLQLRHLANTVQENAKSWVISLGKLLNESAKEELYNLHEEMEHLAKNLRKIPNTLEDLKFVLATIAEIRSKSLVMELRYRDVQERYRTMAMYNLFPPDAEKELVDKIESIWSNLFNDSVNVEHALGDIKRTFTELTRGEIMNYRVQIEEFAKRFYSEGPGSVGDDLDKGVELLGVYERELARHEKSRQELANAEKLFDLPITMYPELLKVQKEMSGLRMIYELYEGLKVAKEEWSQTLWINLNVQILQEGIEGFLRALRKLPRPVRGLSVTYYLEAKMKAFKDSIPLLLDLKNEALRDRHWKELMEKTSVFFEMTETFTLENMFAMELHKHTDVLNEIVTAAIKEVAIEKAVKEILDTWENMKFTVVKYCKGTQERGYILGSVDEIIQSLDDNTFNLQSISGSRFVGPFLQTVHKWEKTLSLIGEVIEIWMLVQRKWMYLESIFIGGDIRSQLPEEAKKFDNIDKVFKRIMGETLKDPVIKRCCEAPNRLSDLQNVSEGLEKCQKSLNDYLDSKRNAFPRFFFISDDELLSILGSSDPLCVQEHMIKMYDNIASLRFNDGDSGEKLVSAMISAEGEVMEFRKILRAEGRVEDWMTAVLNEMRRTNRLITKEAIFRYCEDRSRVDWMLLYQGMVVLAASQVWWTWEVEDVFHKAQKGEKQAMKNYGRKMHRQIDELVTRITMPLSKNDRKKYNTVLIIDVHARDIVDSFIRGSILEAREFDWESQLRFYWDREPDELNIRQCTGTFGYGYEYMGLNGRLVITPLTDRIYLTLTQALSMYLGGAPAGPAGTGKTETTKDLAKALGLLCVVTNCGEGMDYRAVGKIFSGLAQCGAWGCFDEFNRIDASVLSVISSQIQTIRNALIHQLTTFQFEGQEISLDSRMGIFITMNPGYAGRTELPESVKALFRPVVVIVPDLQQICEIMLFSEGFLEAKTLAKKMTVLYKLAREQLSKQYHYDFGLRALKSVLVMAGELKRGSSDLREDVVLMRALRDMNLPKFVFEDVPLFLGLISDLFPGLDCPRVRYPDFNDAVEQVLEENGYAVLPIQVDKVVQMFETMLTRHTTMVVGPTRGGKSVVINTLCQAQTKLGLTTKLYILNPKAVSVIELYGILDPTTRDWTDGVLSNIFREINKPTDKKERKYILFDGDVDALWVENMNSVMDDNRLLTLANGERIRLQAHCALLFEVGDLQYASPATVSRCGMVYVDPKNLKYRPYWKKWVNQIPNKVEQYNLNSLFEKYVPYLMDVIVEGIVDGRQAEKLKTIVPQTDLNMVTQLAKMLDALLEGEIEDLDLLECYFLEALYCSLGASLLEDGRMKFDEYIKRLASLSTVDTEGVWANPGELPGQLPTLYDFHFDNKRNQWVPWSKLVPEYIHAPERKFINILVHTVDTTRTTWILEQMVKIKQPVIFVGESGTSKTATTQNFLKNLSEETNIVLMVNFSSRTTSMDIQRNLEANVEKRTKDTYGPPMGKRLLVFMDDMNMPRVDEYGTQQPIALLKLLLEKGYLYDRGKELNCKSIRDLGFIAAMGKAGGGRNEVDPRFISLFSVFNVPFPSEESLHLIYSSILKGHTSTFHESIVAVSGKLTFCTLALYKNIVQDLPPTPSKFHYIFNLRDLSRVFNGLVLTNPERFQTVAQMVRVWRNECLRVFHDRLISETDKQLVQQHIGSLVVEHFKDDVEVVMRDPILFGDFQMALHEGEPRIYEDIQDYEAAKALFQEILEEYNESNTKMNLVLFDDALEHLTRVHRIIRMDRGHALLVGVGGSGKQSLSRLAAFTASCEVFEILLSRGYSENSFREDLKSLYLKLGIENKAMIFLFTDAHVAEEGFLELINNMLTSGIVPALFSEEEKESILSQIGQEALKQGMGPAKESVWQYFVNKSANNLHIVLGMSPVGDTLRTWCRNFPGMVNNTGIDWFMPWPPQALHAVAKSFLGYNPMIPAENIENVVKHVVLVHQSVDHYSQQFLQKLRRSNYVTPKNYLDFINTYSKLLDEKTQCNIAQCKRLDGGLDKLKEATIQLDELNQKLAEQKIVLAEKSAACEALLEEIAVNTAVAEEKKKLAEEKAMEIEEQNKVIAMEKAEAETTLAEVMPILEAAKLELQKLDKSDVTEIRSFAKPPKQVQTVCECILIMKGYKELNWKTAKGVMSDPNFLRSLMEIDFDSITQSQVKNIKGLLKTLNTTTEEMEAVSKAGLGMLKFVEAVMGYCDVFREIKPKREKVARLERNFYLTKRELERIQNELAAIQKELETLGAKYEAAILEKQKLQEEAEIMERRLIAADKLISGLGSENIRWLNDLDELMHRRVKLLGDCLLCAAFLSYEGAFTWEFRDEMVNRIWQNDILEREIPLSQPFRLESLLTDDVEISRWGSQGLPPDELSVQNGILTTRASRFPLCIDPQQQALNWIKRKEEKNNLRVASFNDPDFLKQLEMSIKYGTPFLFRDVDEYIDPVIDNVLEKNIKVSQGRQFIILGDKEVDYDSNFRLYLNTKLANPRYSPSVFGKAMVINYTVTLKGLEDQLLSVLVAYERRELEEQREHLIQETSENKNLLKDLEDSLLRELATSTGNMLDNVDLVHTLEETKSKATEVSEKLKLAEKTALDIDRLRDGYRPAARRGAILFFVLSEMALVNSMYQYSLIAFLEVFRLSLKKSLPDSILMKRLRNIMDTLTFSIYNHGCTGLFERHKLLFSFNMTIKIEQAEGRVPQEELDFFLKGNISLEKSKRKKPCAWLSDQGWEDIILLSEMFSDNFGQLPDDVENNQTVWQEWYDLDSLEQFPVPLGYDNNITPFQKLLILRCFRVDRVYRAVTDYVTVTMGEKYVQPPMISFEAIFEQSTPHSPIVFILSPGSDPATDLMKLAERSGFGGNRLKFLAMGQGQEKVALQLLETAVARGQWLMLQNCHLLVKWLKDLEKSLERITKPHPDFRLWLTTDPTKGFPIGILQKSLKVVTEPPNGLKLNMRATYFKISHEMLDQCPHPAFKPLVYVLAFFHAVVQERRKFGKIGWNVYYDFNESDFQVCMEILNTYLTKAFQQRDPRIPWGSLKYLIGEVMYGGRAIDSFDRRILTIYMDEYLGDFIFDTFQPFHFFRNKEVDYKIPVGDEKEKFVEAIEALPLANTPEVFGLHPNAEIGYYTQAARDMWAHLLELQPQTGESSSGISRDDYIGQVAKEIENKMPKVFDLDQVRKRLGTGLSPTSVVLLQELERFNKLVVRMTKSLAELQRALAGEVGMSNELDDVARSLFIGHIPNIWRRLAPDTLKSLGNWMVYFLRRFSQYMLWVTESEPSVMWLSGLHIPESYLTALVQATCRKNGWPLDRSTLFTQVTKFQDADEVNERAGQGCFVSGLYLEGADWDIEKGCLIKSKPKVLVVDLPILKIIPIEAHRLKLQNTFRTPVYTTSMRRNAMGVGLVFEADLFTTRHISHWVLQGVCLTLNSD.

Residues 1–1793 are stem; sequence MVPEEVEVEI…NIRQCTGTFG (1793 aa). The tract at residues 46-65 is disordered; that stretch reads TESLGQPLNREDEEMDKEIS. Coiled-coil stretches lie at residues 203–223, 602–622, 1071–1106, and 1217–1245; these read NVQK…GEIK, QEVK…EDRK, KLLN…EDLK, and VELL…KLFD. An N-linked (GlcNAc...) asparagine glycan is attached at Asn-1074. The TPR 1 repeat unit spans residues 1221 to 1254; sequence GVYERELARHEKSRQELANAEKLFDLPITMYPEL. AAA regions lie at residues 1794–2015, 2075–2294, 2417–2665, and 2765–3014; these read YGYE…VLVM, DAVE…VIVE, IHAP…VFNG, and EYNE…LRRS. Positions 1832 to 1839 match the GPAGTGKT motif motif; the sequence is GPAGTGKT. 1832–1839 is an ATP binding site; it reads GPAGTGKT. Residues 1882–1888 carry the CFDEFNR motif motif; sequence CFDEFNR. ATP-binding positions include 2113-2120 and 2455-2462; these read GPTRGGKS and GESGTSKT. TPR repeat units lie at residues 2736–2769 and 2771–2797; these read MALH…YNES and TKMN…MDRG. Residues 2747–2770 are a coiled coil; it reads EDIQDYEAAKALFQEILEEYNESN. Residue 2803–2810 participates in ATP binding; the sequence is GVGGSGKQ. Residues 3029-3313 are stalk; that stretch reads YSKLLDEKTQ…QKLQEEAEIM (285 aa). Coiled-coil stretches lie at residues 3045–3131, 3257–3327, and 3567–3638; these read KRLD…LAEV, KREK…ISGL, and ERRE…EKTA. The segment at 3399-3629 is AAA 5; sequence LTDDVEISRW…TKSKATEVSE (231 aa). One copy of the TPR 4 repeat lies at 3802-3837; the sequence is WQEWYDLDSLEQFPVPLGYDNNITPFQKLLILRCFR. Residues 3845–4062 are AAA 6; it reads VTDYVTVTMG…FQVCMEILNT (218 aa). One copy of the TPR 5 repeat lies at 4074–4108; it reads RIPWGSLKYLIGEVMYGGRAIDSFDRRILTIYMDE. A coiled-coil region spans residues 4235–4260; sequence LLQELERFNKLVVRMTKSLAELQRAL.

The protein belongs to the dynein heavy chain family. In terms of assembly, consists of at least two heavy chains and a number of intermediate and light chains. Expressed primarily in trachea and testis, 2 tissues containing axonemal structures. Also expressed in brain but not in adult heart.

It localises to the cytoplasm. The protein localises to the cytoskeleton. Its subcellular location is the cilium axoneme. Its function is as follows. Force generating protein of respiratory cilia. Produces force towards the minus ends of microtubules. Dynein has ATPase activity; the force-producing power stroke is thought to occur on release of ADP. Involved in sperm motility; implicated in sperm flagellar assembly. Probable inner arm dynein heavy chain. The protein is Dynein axonemal heavy chain 10 (DNAH10) of Homo sapiens (Human).